The chain runs to 226 residues: Lysoplasmalogenase TMEM86B (226 aa).

Topologically, residues 1 to 23 (MDPGKEGLPRKPRFSAQQLHVGK) are cytoplasmic. The chain crosses the membrane as a helical span at residues 24 to 40 (WLSPFFFTCAVYFLLWI). Over 41 to 46 (PDDQPS) the chain is Extracellular. A helical transmembrane segment spans residues 47 to 64 (WVGALVKCLPVLSLVVFL). Residues 65–76 (RAVDAGGGYSAR) lie on the Cytoplasmic side of the membrane. The chain crosses the membrane as a helical span at residues 77-93 (LQGALLCSAVGDACLVW). Residues 94-99 (PEAFLH) are Extracellular-facing. The chain crosses the membrane as a helical span at residues 100–117 (GVAAFAAAHLLYLWAFGL). The Cytoplasmic segment spans residues 118–123 (TPLQPG). Residues 124 to 140 (LLLLVILAALPYYGLLL) form a helical membrane-spanning segment. The Extracellular portion of the chain corresponds to 141–146 (WHLPPD). The chain crosses the membrane as a helical span at residues 147-163 (LVLALTAYSLALATMLW). At 164 to 171 (RGLARGGS) the chain is on the cytoplasmic side. Residues 172 to 188 (TGWGALLFTLSDTTLAW) form a helical membrane-spanning segment. Residues 189–199 (NAFAQPLPHAR) are Extracellular-facing. The helical transmembrane segment at 200–217 (LVVMTTYYSAQVLISLSV) threads the bilayer. The Cytoplasmic segment spans residues 218–226 (SQSPKLKPN).

This sequence belongs to the TMEM86 family. Homodimer.

It localises to the endoplasmic reticulum membrane. The protein localises to the cytoplasm. It catalyses the reaction a 1-O-(1Z-alkenyl)-sn-glycero-3-phosphocholine + H2O = a 2,3-saturated aldehyde + sn-glycerol 3-phosphocholine. It carries out the reaction a 1-O-(1Z-alkenyl)-sn-glycero-3-phosphoethanolamine + H2O = a 2,3-saturated aldehyde + sn-glycero-3-phosphoethanolamine. Competitively inhibited by lysophosphatidic acid. Catalyzes the hydrolysis of the vinyl ether bond of choline or ethanolamine lysoplasmalogens, forming fatty aldehyde and glycerophosphocholine or glycerophosphoethanolamine, respectively and is specific for the sn-2-deacylated (lyso) form of plasmalogen. The chain is Lysoplasmalogenase TMEM86B (TMEM86B) from Sus scrofa (Pig).